The sequence spans 56 residues: UPF0391 membrane protein HCH_04387 (56 aa).

The next 2 membrane-spanning stretches (helical) occupy residues 6-26 (IVFF…IAAA) and 30-50 (IAQI…IAGG).

It belongs to the UPF0391 family.

Its subcellular location is the cell membrane. The chain is UPF0391 membrane protein HCH_04387 from Hahella chejuensis (strain KCTC 2396).